The sequence spans 922 residues: Isoleucine--tRNA ligase (922 aa).

Positions 57–67 match the 'HIGH' region motif; the sequence is PYANGDIHMGH. Position 553 (E553) interacts with L-isoleucyl-5'-AMP. The short motif at 594–598 is the 'KMSKS' region element; the sequence is KMSKS. K597 contacts ATP. The Zn(2+) site is built by C889, C892, C909, and C912.

This sequence belongs to the class-I aminoacyl-tRNA synthetase family. IleS type 1 subfamily. Monomer. The cofactor is Zn(2+).

The protein resides in the cytoplasm. It catalyses the reaction tRNA(Ile) + L-isoleucine + ATP = L-isoleucyl-tRNA(Ile) + AMP + diphosphate. Functionally, catalyzes the attachment of isoleucine to tRNA(Ile). As IleRS can inadvertently accommodate and process structurally similar amino acids such as valine, to avoid such errors it has two additional distinct tRNA(Ile)-dependent editing activities. One activity is designated as 'pretransfer' editing and involves the hydrolysis of activated Val-AMP. The other activity is designated 'posttransfer' editing and involves deacylation of mischarged Val-tRNA(Ile). This Bacillus licheniformis (strain ATCC 14580 / DSM 13 / JCM 2505 / CCUG 7422 / NBRC 12200 / NCIMB 9375 / NCTC 10341 / NRRL NRS-1264 / Gibson 46) protein is Isoleucine--tRNA ligase.